Consider the following 149-residue polypeptide: Thioredoxin-like protein 4B (149 aa).

It belongs to the DIM1 family. Homodimer. Interacts with the U5-102 kDa protein subunit of the spliceosome.

Its subcellular location is the nucleus. Its function is as follows. Essential role in pre-mRNA splicing. Required in cell cycle progression for S/G(2) transition. The sequence is that of Thioredoxin-like protein 4B (Txnl4b) from Mus musculus (Mouse).